A 427-amino-acid polypeptide reads, in one-letter code: Serine--tRNA ligase (427 aa).

231-233 (TAE) contacts L-serine. Residue 262 to 264 (RSE) coordinates ATP. Position 285 (E285) interacts with L-serine. Residue 349–352 (EISS) coordinates ATP. S385 provides a ligand contact to L-serine.

Belongs to the class-II aminoacyl-tRNA synthetase family. Type-1 seryl-tRNA synthetase subfamily. As to quaternary structure, homodimer. The tRNA molecule binds across the dimer.

Its subcellular location is the cytoplasm. It catalyses the reaction tRNA(Ser) + L-serine + ATP = L-seryl-tRNA(Ser) + AMP + diphosphate + H(+). The catalysed reaction is tRNA(Sec) + L-serine + ATP = L-seryl-tRNA(Sec) + AMP + diphosphate + H(+). It participates in aminoacyl-tRNA biosynthesis; selenocysteinyl-tRNA(Sec) biosynthesis; L-seryl-tRNA(Sec) from L-serine and tRNA(Sec): step 1/1. In terms of biological role, catalyzes the attachment of serine to tRNA(Ser). Is also able to aminoacylate tRNA(Sec) with serine, to form the misacylated tRNA L-seryl-tRNA(Sec), which will be further converted into selenocysteinyl-tRNA(Sec). This is Serine--tRNA ligase from Allorhizobium ampelinum (strain ATCC BAA-846 / DSM 112012 / S4) (Agrobacterium vitis (strain S4)).